Consider the following 218-residue polypeptide: Adenylate kinase (218 aa).

10–15 lines the ATP pocket; it reads GAGKGT. An NMP region spans residues 30 to 59; that stretch reads STGDMLRAAVKAGTPLGIEAKKVMDAGGLM. AMP contacts are provided by residues Thr-31, Arg-36, 57 to 59, 85 to 88, and Gln-92; these read GLM and GYPR. Positions 122-159 are LID; that stretch reads GRWVHLASGRSYNTQSNPPKVAGQDDITGEALIQRDDD. ATP is bound by residues Arg-123 and 132–133; that span reads SY. Arg-156 and Arg-167 together coordinate AMP. Position 203 (Gly-203) interacts with ATP.

The protein belongs to the adenylate kinase family. In terms of assembly, monomer.

The protein localises to the cytoplasm. The catalysed reaction is AMP + ATP = 2 ADP. It participates in purine metabolism; AMP biosynthesis via salvage pathway; AMP from ADP: step 1/1. Catalyzes the reversible transfer of the terminal phosphate group between ATP and AMP. Plays an important role in cellular energy homeostasis and in adenine nucleotide metabolism. The chain is Adenylate kinase from Bordetella avium (strain 197N).